Here is a 225-residue protein sequence, read N- to C-terminus: MSGRAGRHGLADDAQLTMHAAALIRLGARLQMLEIECALPREHLVRLYREVRGVAAPKGLLPSSIDWYMTWLANIHASLFHNIYRFLRNQAGCPRLEALVKAYTLYAEQGDATRRALPLDLTRALPLDLTRAWMLVRFVDAGVLDIARCRDCGAAFITYRHALRRHPVCVACRLPARAGKRAVAAPQRATADTRHARRQDARTAVVACRDGSTTTGGASGERHAV.

Residues cysteine 149, cysteine 152, cysteine 169, and cysteine 172 each coordinate Zn(2+).

It belongs to the FlhC family. Heterohexamer composed of two FlhC and four FlhD subunits. Each FlhC binds a FlhD dimer, forming a heterotrimer, and a hexamer assembles by dimerization of two heterotrimers. Requires Zn(2+) as cofactor.

It localises to the cytoplasm. In terms of biological role, functions in complex with FlhD as a master transcriptional regulator that regulates transcription of several flagellar and non-flagellar operons by binding to their promoter region. Activates expression of class 2 flagellar genes, including fliA, which is a flagellum-specific sigma factor that turns on the class 3 genes. Also regulates genes whose products function in a variety of physiological pathways. In Burkholderia lata (strain ATCC 17760 / DSM 23089 / LMG 22485 / NCIMB 9086 / R18194 / 383), this protein is Flagellar transcriptional regulator FlhC.